The sequence spans 265 residues: Glutamate racemase (265 aa).

Substrate-binding positions include 7–8 (DS) and 39–40 (YG). C70 functions as the Proton donor/acceptor in the catalytic mechanism. Substrate is bound at residue 71–72 (NT). The active-site Proton donor/acceptor is the C179. 180–181 (TH) contributes to the substrate binding site.

The protein belongs to the aspartate/glutamate racemases family.

The enzyme catalyses L-glutamate = D-glutamate. It participates in cell wall biogenesis; peptidoglycan biosynthesis. In terms of biological role, provides the (R)-glutamate required for cell wall biosynthesis. The sequence is that of Glutamate racemase from Gloeobacter violaceus (strain ATCC 29082 / PCC 7421).